The sequence spans 489 residues: Argininosuccinate lyase (489 aa).

Residues 1–20 (MSEPSAAVGQRPGGESAPAH) form a disordered region.

It belongs to the lyase 1 family. Argininosuccinate lyase subfamily.

The protein localises to the cytoplasm. The catalysed reaction is 2-(N(omega)-L-arginino)succinate = fumarate + L-arginine. It participates in amino-acid biosynthesis; L-arginine biosynthesis; L-arginine from L-ornithine and carbamoyl phosphate: step 3/3. The chain is Argininosuccinate lyase from Acidothermus cellulolyticus (strain ATCC 43068 / DSM 8971 / 11B).